Consider the following 408-residue polypeptide: Imidazolonepropionase (408 aa).

2 residues coordinate Fe(3+): histidine 73 and histidine 75. Residues histidine 73 and histidine 75 each coordinate Zn(2+). Arginine 82, tyrosine 145, and histidine 178 together coordinate 4-imidazolone-5-propanoate. Residue tyrosine 145 participates in N-formimidoyl-L-glutamate binding. Residue histidine 243 coordinates Fe(3+). Histidine 243 serves as a coordination point for Zn(2+). Glutamine 246 lines the 4-imidazolone-5-propanoate pocket. Aspartate 318 is a Fe(3+) binding site. Aspartate 318 serves as a coordination point for Zn(2+). Residues asparagine 320 and glycine 322 each contribute to the N-formimidoyl-L-glutamate site. Serine 323 provides a ligand contact to 4-imidazolone-5-propanoate.

This sequence belongs to the metallo-dependent hydrolases superfamily. HutI family. It depends on Zn(2+) as a cofactor. The cofactor is Fe(3+).

Its subcellular location is the cytoplasm. It catalyses the reaction 4-imidazolone-5-propanoate + H2O = N-formimidoyl-L-glutamate. The protein operates within amino-acid degradation; L-histidine degradation into L-glutamate; N-formimidoyl-L-glutamate from L-histidine: step 3/3. Catalyzes the hydrolytic cleavage of the carbon-nitrogen bond in imidazolone-5-propanoate to yield N-formimidoyl-L-glutamate. It is the third step in the universal histidine degradation pathway. This is Imidazolonepropionase from Shewanella baltica (strain OS155 / ATCC BAA-1091).